The chain runs to 40 residues: Cytolysin SmT-1 (40 aa).

A plays an important role in the hemolytic activity region spans residues 3 to 12 (ALAGTIIAGA). The segment at 11 to 30 (GASLGFQILDKVLGELGKVS) is N-terminal region.

The protein belongs to the actinoporin family. Sea anemone subfamily. In terms of assembly, octamer or nonamer in membranes. Monomer in the soluble state.

It localises to the secreted. It is found in the nematocyst. The protein resides in the target cell membrane. Its function is as follows. Pore-forming protein that forms cations-selective hydrophilic pores of around 1 nm and causes cardiac stimulation and cytolysis. Pore formation is a multi-step process that involves specific recognition of membrane sphingomyelin (but neither cholesterol nor phosphatidylcholine) using aromatic rich region and adjacent phosphocholine (POC) binding site, firm binding to the membrane (mainly driven by hydrophobic interactions) accompanied by the transfer of the N-terminal region to the lipid-water interface and finally pore formation after oligomerization of monomers. This toxin shows hemolytic activities. The protein is Cytolysin SmT-1 of Stichodactyla mertensii (Merten's carpet sea anemone).